Here is a 359-residue protein sequence, read N- to C-terminus: Tryptophan 2,3-dioxygenase (359 aa).

Substrate contacts are provided by residues 38 to 42 (FIIVH) and arginine 109. Residue histidine 295 participates in heme binding. Threonine 309 contacts substrate.

This sequence belongs to the tryptophan 2,3-dioxygenase family. In terms of assembly, homotetramer. It depends on heme as a cofactor.

It carries out the reaction L-tryptophan + O2 = N-formyl-L-kynurenine. It participates in amino-acid degradation; L-tryptophan degradation via kynurenine pathway; L-kynurenine from L-tryptophan: step 1/2. Functionally, heme-dependent dioxygenase that catalyzes the oxidative cleavage of the L-tryptophan (L-Trp) pyrrole ring and converts L-tryptophan to N-formyl-L-kynurenine. Catalyzes the oxidative cleavage of the indole moiety. The sequence is that of Tryptophan 2,3-dioxygenase from Bdellovibrio bacteriovorus (strain ATCC 15356 / DSM 50701 / NCIMB 9529 / HD100).